An 81-amino-acid polypeptide reads, in one-letter code: Photosystem I iron-sulfur center (81 aa).

2 4Fe-4S ferredoxin-type domains span residues 2–31 (AHSVKIYDTCIGCTQCVRACPTDVLEMVPW) and 39–68 (IASAPRTEDCVGCKRCESACPTDFLSVRVY). [4Fe-4S] cluster contacts are provided by C11, C14, C17, C21, C48, C51, C54, and C58.

The eukaryotic PSI reaction center is composed of at least 11 subunits. Requires [4Fe-4S] cluster as cofactor.

It localises to the plastid. The protein resides in the chloroplast thylakoid membrane. It catalyses the reaction reduced [plastocyanin] + hnu + oxidized [2Fe-2S]-[ferredoxin] = oxidized [plastocyanin] + reduced [2Fe-2S]-[ferredoxin]. Functionally, apoprotein for the two 4Fe-4S centers FA and FB of photosystem I (PSI); essential for photochemical activity. FB is the terminal electron acceptor of PSI, donating electrons to ferredoxin. The C-terminus interacts with PsaA/B/D and helps assemble the protein into the PSI complex. Required for binding of PsaD and PsaE to PSI. PSI is a plastocyanin-ferredoxin oxidoreductase, converting photonic excitation into a charge separation, which transfers an electron from the donor P700 chlorophyll pair to the spectroscopically characterized acceptors A0, A1, FX, FA and FB in turn. In Physcomitrium patens (Spreading-leaved earth moss), this protein is Photosystem I iron-sulfur center.